Here is a 214-residue protein sequence, read N- to C-terminus: Cytochrome b (214 aa).

A run of 4 helical transmembrane segments spans residues Phe-31–Ile-51, Trp-75–Ile-96, Trp-111–Leu-131, and Phe-176–Ile-196. The heme b site is built by His-81 and His-95. 2 residues coordinate heme b: His-180 and His-194. His-199 lines the a ubiquinone pocket.

The protein belongs to the cytochrome b family. In terms of assembly, the cytochrome bc1 complex contains 3 respiratory subunits (MT-CYB, CYC1 and UQCRFS1), 2 core proteins (UQCRC1 and UQCRC2) and probably 6 low-molecular weight proteins. Requires heme b as cofactor.

It localises to the mitochondrion inner membrane. Functionally, component of the ubiquinol-cytochrome c reductase complex (complex III or cytochrome b-c1 complex) that is part of the mitochondrial respiratory chain. The b-c1 complex mediates electron transfer from ubiquinol to cytochrome c. Contributes to the generation of a proton gradient across the mitochondrial membrane that is then used for ATP synthesis. This chain is Cytochrome b (MT-CYB), found in Atractaspis micropholis (Mole viper).